Here is a 764-residue protein sequence, read N- to C-terminus: Protein FAR1-RELATED SEQUENCE 7 (764 aa).

The FAR1 1 domain occupies 42 to 118; it reads DYYNSYATRT…QKEHNHDLGG (77 aa). The interval 119 to 144 is disordered; it reads HIEEAQTTPRPSVQQRAPAPTKLGIS. The segment covering 123–133 has biased composition (polar residues); the sequence is AQTTPRPSVQQ. Residues 204 to 280 enclose the FAR1 2 domain; sequence QFYQAYAEVV…NKDHNHDLEP (77 aa). One can recognise an MULE domain in the interval 375 to 471; sequence AVVFDTSYRK…SAWQIRSKER (97 aa). The SWIM-type zinc-finger motif lies at 650 to 686; that stretch reads HAVTFSASNLNASCSCQMFEYEGLLCRHILKVFNLLD.

The protein belongs to the FHY3/FAR1 family. In terms of tissue distribution, expressed in hypocotyls, rosette and cauline leaves, inflorescences stems, flowers and siliques.

The protein localises to the nucleus. Putative transcription activator involved in regulating light control of development. The protein is Protein FAR1-RELATED SEQUENCE 7 (FRS7) of Arabidopsis thaliana (Mouse-ear cress).